We begin with the raw amino-acid sequence, 544 residues long: Chaperonin GroEL 1 (544 aa).

ATP-binding positions include T29 to P32, D86 to T90, G413, N479 to A481, and D495.

Belongs to the chaperonin (HSP60) family. Forms a cylinder of 14 subunits composed of two heptameric rings stacked back-to-back. Interacts with the co-chaperonin GroES.

It localises to the cytoplasm. It carries out the reaction ATP + H2O + a folded polypeptide = ADP + phosphate + an unfolded polypeptide.. Its function is as follows. Together with its co-chaperonin GroES, plays an essential role in assisting protein folding. The GroEL-GroES system forms a nano-cage that allows encapsulation of the non-native substrate proteins and provides a physical environment optimized to promote and accelerate protein folding. This Parasynechococcus marenigrum (strain WH8102) protein is Chaperonin GroEL 1.